The following is a 326-amino-acid chain: GTPase Obg (326 aa).

Residues 1–159 enclose the Obg domain; it reads MKFVDSAKIY…LEIELELKLM (159 aa). The segment at 119–138 is disordered; sequence EGGKGGKGNPHFASSTRQAP. One can recognise an OBG-type G domain in the interval 160–323; that stretch reads ADVGLVGFPN…LKDELWSRVK (164 aa). GTP is bound by residues 166-173, 191-195, 213-216, 280-283, and 304-306; these read GFPNAGKS, FTTLV, DIPG, TKMD, and SSV. The Mg(2+) site is built by serine 173 and threonine 193.

It belongs to the TRAFAC class OBG-HflX-like GTPase superfamily. OBG GTPase family. As to quaternary structure, monomer. Mg(2+) is required as a cofactor.

Its subcellular location is the cytoplasm. Functionally, an essential GTPase which binds GTP, GDP and possibly (p)ppGpp with moderate affinity, with high nucleotide exchange rates and a fairly low GTP hydrolysis rate. Plays a role in control of the cell cycle, stress response, ribosome biogenesis and in those bacteria that undergo differentiation, in morphogenesis control. The polypeptide is GTPase Obg (Chlorobium phaeobacteroides (strain BS1)).